A 31-amino-acid chain; its full sequence is Protamine-1B (31 aa).

A disordered region spans residues 1–31 (MPRRRRASRRIRRRRRPRVSRRRRRGGRRRR).

In terms of tissue distribution, testis.

It is found in the nucleus. Its subcellular location is the chromosome. Its function is as follows. Protamines substitute for histones in the chromatin of sperm during the haploid phase of spermatogenesis. They compact sperm DNA into a highly condensed, stable and inactive complex. The polypeptide is Protamine-1B (Oncorhynchus mykiss (Rainbow trout)).